Reading from the N-terminus, the 338-residue chain is Elongation factor Ts, mitochondrial (338 aa).

The N-terminal 42 residues, 1 to 42 (MSPSIAMFTLTPNARALASKTSKMDLIKNLRERTGAPIVDVK), are a transit peptide targeting the mitochondrion.

Belongs to the EF-Ts family.

The protein localises to the mitochondrion. Functionally, associates with the EF-Tu.GDP complex and induces the exchange of GDP to GTP. It remains bound to the aminoacyl-tRNA.EF-Tu.GTP complex up to the GTP hydrolysis stage on the ribosome. This chain is Elongation factor Ts, mitochondrial, found in Ostreococcus tauri.